Consider the following 1249-residue polypeptide: LRR receptor-like serine/threonine-protein kinase GSO1 (1249 aa).

The N-terminal stretch at methionine 1–glycine 18 is a signal peptide. Over glutamine 19 to valine 876 the chain is Extracellular. N-linked (GlcNAc...) asparagine glycosylation is found at asparagine 77 and asparagine 117. LRR repeat units lie at residues phenylalanine 94–leucine 118, threonine 119–leucine 142, asparagine 144–leucine 166, asparagine 168–leucine 190, valine 191–cysteine 214, aspartate 216–leucine 238, glutamate 239–methionine 262, glutamine 264–aspartate 285, leucine 286–methionine 310, glutamine 312–asparagine 334, threonine 336–cysteine 359, glutamine 360–leucine 383, glutamate 385–leucine 407, threonine 408–leucine 431, lysine 433–cysteine 455, serine 457–leucine 479, lysine 480–cysteine 503, glutamine 505–leucine 527, lysine 528–leucine 551, asparagine 553–serine 574, serine 576–serine 598, glutamine 599–isoleucine 622, arginine 623–cysteine 646, lysine 648–leucine 670, serine 671–cysteine 694, lysine 696–leucine 718, glycine 719–leucine 742, lysine 744–leucine 766, glutamine 767–leucine 791, serine 792–methionine 815, and serine 817–arginine 838. N-linked (GlcNAc...) asparagine glycans are attached at residues asparagine 213, asparagine 228, and asparagine 248. Asparagine 298, asparagine 309, and asparagine 334 each carry an N-linked (GlcNAc...) asparagine glycan. Residues asparagine 369, asparagine 393, and asparagine 406 are each glycosylated (N-linked (GlcNAc...) asparagine). Asparagine 454 carries an N-linked (GlcNAc...) asparagine glycan. N-linked (GlcNAc...) asparagine glycosylation is found at asparagine 537, asparagine 553, asparagine 558, and asparagine 565. 2 N-linked (GlcNAc...) asparagine glycosylation sites follow: asparagine 693 and asparagine 708. The N-linked (GlcNAc...) asparagine glycan is linked to asparagine 779. Asparagine 822 is a glycosylation site (N-linked (GlcNAc...) asparagine). A helical membrane pass occupies residues isoleucine 877 to phenylalanine 897. Residues phenylalanine 898–leucine 1249 are Cytoplasmic-facing. At threonine 948 the chain carries Phosphothreonine. One can recognise a Protein kinase domain in the interval leucine 951–asparagine 1240. ATP contacts are provided by residues isoleucine 957–valine 965 and lysine 979. Phosphotyrosine occurs at positions 1027 and 1071. Catalysis depends on aspartate 1084, which acts as the Proton acceptor. Tyrosine 1129 and tyrosine 1136 each carry phosphotyrosine.

Belongs to the protein kinase superfamily. Ser/Thr protein kinase family. Interacts with CIF1 and CIF2. In terms of tissue distribution, mostly expressed in siliques, seeds, developing embryos and seedlings, detected in flower buds and roots, but not in leaves or stems.

It localises to the cell membrane. It carries out the reaction L-seryl-[protein] + ATP = O-phospho-L-seryl-[protein] + ADP + H(+). It catalyses the reaction L-threonyl-[protein] + ATP = O-phospho-L-threonyl-[protein] + ADP + H(+). Its function is as follows. Together with GSO2, receptor-like serine/threonine-kinase required during the development of the epidermal surface in embryos and cotyledons. In coordination with GSO2, regulates root growth through control of cell division and cell fate specification. Controls seedling root growth by modulating sucrose response after germination. Receptor of the peptide hormones CIF1 and CIF2 required for contiguous Casparian strip diffusion barrier formation in roots. Required for localizing CASP proteins into the Casparian strip following an uninterrupted, ring-like domain, to trigger endodermal differentiation and thus regulate potassium ion (K) homeostasis. Involved in the maintenance of water transport and root pressure. May also be involved in the regulation of suberin accumulation in the endodermis. The sequence is that of LRR receptor-like serine/threonine-protein kinase GSO1 from Arabidopsis thaliana (Mouse-ear cress).